The following is a 399-amino-acid chain: Ras-related GTP-binding protein C (399 aa).

The tract at residues 1-20 (MSLQYGAEETPLAGSYGAAD) is disordered. At Ser-2 the chain carries N-acetylserine. Phosphoserine occurs at positions 2 and 15. Arg-71, Ser-72, Gly-73, Lys-74, Ser-75, Ser-76, Thr-90, Glu-94, Thr-96, His-178, Lys-179, Asp-181, Ser-219, and Ile-220 together coordinate GDP. Lys-74 lines the GTP pocket. Thr-90 is a GTP binding site. Thr-96 is a binding site for GTP. A Phosphothreonine modification is found at Thr-96. Asp-181 is a binding site for GTP.

The protein belongs to the GTR/RAG GTP-binding protein family. As to quaternary structure, forms a heterodimer with RRAGA, in a sequence-independent manner, and RRAGB. Heterodimerization stabilizes proteins of the heterodimer. The GDP-bound form of RRAGC (in complex with the GTP-bound form of RRAGA or RRAGB), interacts with RPTOR, thereby promoting recruitment of mTORC1 to the lysosomes. Component of the lysosomal folliculin complex (LFC), composed of FLCN, FNIP1 (or FNIP2), RagA/RRAGA or RagB/RRAGB GDP-bound, RagC/RRAGC or RagD/RRAGD GTP-bound, and Ragulator. Interacts with NOL8. Interacts with SH3BP4; the interaction with this negative regulator is most probably direct, preferentially occurs with the inactive GDP-bound form of RRAGB, is negatively regulated by amino acids and prevents interaction with RPTOR. The Rag heterodimer interacts with SLC38A9; the probable amino acid sensor. Interacts with SESN1, SESN2 and SESN3. Interacts with PIP4P1. The Rag heterodimer interacts with the Ragulator complex. The GDP-bound form interacts with TFEB. The GDP-bound form interacts with TFE3.

It localises to the cytoplasm. It is found in the nucleus. The protein resides in the lysosome membrane. The enzyme catalyses GTP + H2O = GDP + phosphate + H(+). Its activity is regulated as follows. The activation of RagC/RRAGC is mediated by a GTPase activating protein (GAP). In high-amino acid conditions, activated by GTPase activating protein FLCN that stimulates RRAGC GTPase activity to turn it into its active GDP-bound form. In response to amino acid depletion, the GATOR1 complex inactivates RagC/RRAGC by securing the GTP-bound inactive form. Guanine nucleotide-binding protein that plays a crucial role in the cellular response to amino acid availability through regulation of the mTORC1 signaling cascade. Forms heterodimeric Rag complexes with RagA/RRAGA or RagB/RRAGB and cycles between an inactive GTP-bound and an active GDP-bound form: RagC/RRAGC is in its active form when GDP-bound RagC/RRAGC forms a complex with GTP-bound RagA/RRAGA (or RagB/RRAGB) and in an inactive form when GTP-bound RagC/RRAGC heterodimerizes with GDP-bound RagA/RRAGA (or RagB/RRAGB). In its GDP-bound active form, promotes the recruitment of mTORC1 to the lysosomes and its subsequent activation by the GTPase RHEB. This is a crucial step in the activation of the MTOR signaling cascade by amino acids. Also plays a central role in the non-canonical mTORC1 complex, which acts independently of RHEB and specifically mediates phosphorylation of MiT/TFE factors TFEB and TFE3: GDP-bound RagC/RRAGC mediates recruitment of MiT/TFE factors TFEB and TFE3. The polypeptide is Ras-related GTP-binding protein C (Homo sapiens (Human)).